Reading from the N-terminus, the 376-residue chain is Phosphate-binding protein (376 aa).

Disulfide bonds link Cys113/Cys158 and Cys306/Cys369.

In terms of assembly, heterooligomer with human PON1. As to expression, found in human plasma.

The protein resides in the secreted. Its function is as follows. Phosphate-binding protein. This chain is Phosphate-binding protein, found in Unknown prokaryotic organism.